The chain runs to 153 residues: Ribosome maturation factor RimP (153 aa).

Belongs to the RimP family.

It localises to the cytoplasm. In terms of biological role, required for maturation of 30S ribosomal subunits. This chain is Ribosome maturation factor RimP, found in Clostridium botulinum (strain Okra / Type B1).